We begin with the raw amino-acid sequence, 179 residues long: 3-hydroxyanthranilate 3,4-dioxygenase 2 (179 aa).

Arginine 44 provides a ligand contact to O2. Fe cation contacts are provided by histidine 48, glutamate 60, and histidine 99. Glutamate 60 provides a ligand contact to substrate. 2 residues coordinate substrate: arginine 103 and glutamate 113.

This sequence belongs to the 3-HAO family. It depends on Fe(2+) as a cofactor.

The protein resides in the cytoplasm. The enzyme catalyses 3-hydroxyanthranilate + O2 = (2Z,4Z)-2-amino-3-carboxymuconate 6-semialdehyde. Its pathway is cofactor biosynthesis; NAD(+) biosynthesis; quinolinate from L-kynurenine: step 3/3. Catalyzes the oxidative ring opening of 3-hydroxyanthranilate to 2-amino-3-carboxymuconate semialdehyde, which spontaneously cyclizes to quinolinate. The protein is 3-hydroxyanthranilate 3,4-dioxygenase 2 (bna1-2) of Aspergillus oryzae (strain ATCC 42149 / RIB 40) (Yellow koji mold).